Reading from the N-terminus, the 104-residue chain is MAVRKLWKTVVQLFSKSKSEECNTEAGTMEVSCLKYGVQGLNADCSYVKSQCIKLSECECLYTFASDVCKEDFHNSEEMKVFVVQHSQEIVGGTDFSVHAEESV.

The helical transmembrane segment at 37-54 (GVQGLNADCSYVKSQCIK) threads the bilayer.

The protein localises to the host membrane. This chain is Protein U9 (U9), found in Human herpesvirus 6B (HHV-6 variant B).